Here is a 30-residue protein sequence, read N- to C-terminus: Trypsin inhibitor 6 (30 aa).

Intrachain disulfides connect Cys4–Cys21, Cys11–Cys23, and Cys17–Cys29.

The protein belongs to the protease inhibitor I7 (squash-type serine protease inhibitor) family.

The protein localises to the secreted. Strongly inhibits trypsin, weakly inhibits chymotrypsin. This Cyclanthera pedata (Achocha) protein is Trypsin inhibitor 6.